Here is a 234-residue protein sequence, read N- to C-terminus: Cytochrome b (234 aa).

The next 4 helical transmembrane spans lie at 33–53, 77–98, 113–133, and 178–198; these read FGSLLGLCLMIQILTGLFLAM, WLIRYLHANGASMFFICLYMHV, WNIGIILLFAVMATAFMGYVL, and FFAFHFILPFIIAALVMIHLL. Histidine 83 and histidine 97 together coordinate heme b. 2 residues coordinate heme b: histidine 182 and histidine 196. Position 201 (histidine 201) interacts with a ubiquinone. Residues 226–234 traverse the membrane as a helical segment; it reads IKDLLGFLV.

This sequence belongs to the cytochrome b family. The cytochrome bc1 complex contains 11 subunits: 3 respiratory subunits (MT-CYB, CYC1 and UQCRFS1), 2 core proteins (UQCRC1 and UQCRC2) and 6 low-molecular weight proteins (UQCRH/QCR6, UQCRB/QCR7, UQCRQ/QCR8, UQCR10/QCR9, UQCR11/QCR10 and a cleavage product of UQCRFS1). This cytochrome bc1 complex then forms a dimer. It depends on heme b as a cofactor.

The protein localises to the mitochondrion inner membrane. Component of the ubiquinol-cytochrome c reductase complex (complex III or cytochrome b-c1 complex) that is part of the mitochondrial respiratory chain. The b-c1 complex mediates electron transfer from ubiquinol to cytochrome c. Contributes to the generation of a proton gradient across the mitochondrial membrane that is then used for ATP synthesis. The chain is Cytochrome b (MT-CYB) from Lepus arcticus (Arctic hare).